The sequence spans 198 residues: Segregation and condensation protein B (198 aa).

Positions 168-198 (KLADPATDEPDQNEMDLFFDRFNQSKEQEEE) are disordered.

The protein belongs to the ScpB family. In terms of assembly, homodimer. Homodimerization may be required to stabilize the binding of ScpA to the Smc head domains. Component of a cohesin-like complex composed of ScpA, ScpB and the Smc homodimer, in which ScpA and ScpB bind to the head domain of Smc. The presence of the three proteins is required for the association of the complex with DNA.

It localises to the cytoplasm. Functionally, participates in chromosomal partition during cell division. May act via the formation of a condensin-like complex containing Smc and ScpA that pull DNA away from mid-cell into both cell halves. The sequence is that of Segregation and condensation protein B from Listeria monocytogenes serotype 4b (strain CLIP80459).